The chain runs to 77 residues: MKLFLAIVLILMLQFLSTGAETSDNHASRSTTALRDWLLGPKAKRCAVTHEKCSDDYDCCGSLCCVGICAKTIAPCK.

A signal peptide spans 1 to 20 (MKLFLAIVLILMLQFLSTGA). A propeptide spanning residues 21–45 (ETSDNHASRSTTALRDWLLGPKAKR) is cleaved from the precursor. 4 disulfide bridges follow: Cys46/Cys60, Cys53/Cys65, Cys59/Cys69, and Cys64/Cys76.

The protein belongs to the conotoxin I3 superfamily. In terms of tissue distribution, expressed by the venom duct.

It localises to the secreted. Its function is as follows. May embed in the membrane and bind to the voltage sensor domain of a ion channel. Does not induce paralysis when injected in fish, leading to the hypothesis that it may be part of the sedative nirvana cabal. The polypeptide is Conotoxin G11.1 (Conus geographus (Geography cone)).